A 191-amino-acid chain; its full sequence is MSRCGSLGLYAPNALPSLSLKPRSVKSPFCITSHTKPNDTLLHNVNKMRAKACDILGAKKTILAAQLGAVLATIDHPALAITGVNNQQELSSVVLDIGIISVWYFLVMPPIIMNWLRVRWYRRKFFEMYLQFMFVFMFFPGLLLWAPFLNFRKFPRDPNMKNPWDKPTDPDSIKNVYLKYPYATPEDYDLD.

Residues 1 to 46 (MSRCGSLGLYAPNALPSLSLKPRSVKSPFCITSHTKPNDTLLHNVN) constitute a chloroplast transit peptide. A run of 3 helical transmembrane segments spans residues 61-81 (TILA…ALAI), 93-113 (VVLD…PIIM), and 129-149 (YLQF…APFL).

This sequence belongs to the NDH complex subunit L family. As to quaternary structure, part of the chloroplast NDH complex, composed of a mixture of chloroplast and nucleus encoded subunits. Component of the NDH subcomplex A, at least composed of ndhH, ndhI, ndhJ, ndhK, ndhL, ndhM, ndhN and ndhO.

It localises to the plastid. Its subcellular location is the chloroplast thylakoid membrane. It carries out the reaction a plastoquinone + NADH + (n+1) H(+)(in) = a plastoquinol + NAD(+) + n H(+)(out). The catalysed reaction is a plastoquinone + NADPH + (n+1) H(+)(in) = a plastoquinol + NADP(+) + n H(+)(out). Its function is as follows. NDH shuttles electrons from NAD(P)H:plastoquinone, via FMN and iron-sulfur (Fe-S) centers, to quinones in the photosynthetic chain and possibly in a chloroplast respiratory chain. The immediate electron acceptor for the enzyme in this species is believed to be plastoquinone. Couples the redox reaction to proton translocation, and thus conserves the redox energy in a proton gradient. This Arabidopsis thaliana (Mouse-ear cress) protein is NAD(P)H-quinone oxidoreductase subunit L, chloroplastic.